Reading from the N-terminus, the 520-residue chain is Probable methylmalonate-semialdehyde/malonate-semialdehyde dehydrogenase [acylating], mitochondrial (520 aa).

Positions 169, 171, 195, 198, 199, and 248 each coordinate NAD(+). Cysteine 303 functions as the Nucleophile in the catalytic mechanism. Glutamate 403 is a binding site for NAD(+).

This sequence belongs to the aldehyde dehydrogenase family. Homotetramer.

Its subcellular location is the mitochondrion. It carries out the reaction 2-methyl-3-oxopropanoate + NAD(+) + CoA + H2O = propanoyl-CoA + hydrogencarbonate + NADH + H(+). The catalysed reaction is 3-oxopropanoate + NAD(+) + CoA + H2O = hydrogencarbonate + acetyl-CoA + NADH + H(+). In terms of biological role, probable malonate and methylmalonate semialdehyde dehydrogenase involved in the catabolism of valine, thymine, and compounds catabolized by way of beta-alanine, including uracil and cytidine. The chain is Probable methylmalonate-semialdehyde/malonate-semialdehyde dehydrogenase [acylating], mitochondrial from Drosophila pseudoobscura pseudoobscura (Fruit fly).